We begin with the raw amino-acid sequence, 97 residues long: Class II hydrophobin 3 (97 aa).

A signal peptide spans 1–16 (MKFFAAAALFIAGVLA). 4 disulfide bridges follow: Cys30/Cys79, Cys40/Cys70, Cys41/Cys53, and Cys80/Cys91.

This sequence belongs to the cerato-ulmin hydrophobin family. As to quaternary structure, homodimer. Homodimers further self-assemble to form highly ordered films at water-air interfaces through intermolecular interactions.

It localises to the secreted. The protein resides in the cell wall. In terms of biological role, aerial growth, conidiation, and dispersal of filamentous fungi in the environment rely upon a capability of their secreting small amphipathic proteins called hydrophobins (HPBs) with low sequence identity. Class I can self-assemble into an outermost layer of rodlet bundles on aerial cell surfaces, conferring cellular hydrophobicity that supports fungal growth, development and dispersal; whereas Class II form highly ordered films at water-air interfaces through intermolecular interactions but contribute nothing to the rodlet structure. The sequence is that of Class II hydrophobin 3 from Trichoderma asperellum (strain ATCC 204424 / CBS 433.97 / NBRC 101777).